Here is a 255-residue protein sequence, read N- to C-terminus: Taurine import ATP-binding protein TauB (255 aa).

Residues 2-229 (LQISHLYADY…RFVAGESSRS (228 aa)) form the ABC transporter domain. 34-41 (GPSGCGKT) provides a ligand contact to ATP.

The protein belongs to the ABC transporter superfamily. Taurine importer (TC 3.A.1.17.1) family. In terms of assembly, the complex is composed of two ATP-binding proteins (TauB), two transmembrane proteins (TauC) and a solute-binding protein (TauA).

The protein localises to the cell inner membrane. The enzyme catalyses taurine(out) + ATP + H2O = taurine(in) + ADP + phosphate + H(+). Functionally, part of the ABC transporter complex TauABC involved in taurine import. Responsible for energy coupling to the transport system. This chain is Taurine import ATP-binding protein TauB, found in Shigella boydii serotype 4 (strain Sb227).